The chain runs to 200 residues: Imidazoleglycerol-phosphate dehydratase (200 aa).

The protein belongs to the imidazoleglycerol-phosphate dehydratase family.

Its subcellular location is the cytoplasm. It carries out the reaction D-erythro-1-(imidazol-4-yl)glycerol 3-phosphate = 3-(imidazol-4-yl)-2-oxopropyl phosphate + H2O. It participates in amino-acid biosynthesis; L-histidine biosynthesis; L-histidine from 5-phospho-alpha-D-ribose 1-diphosphate: step 6/9. The chain is Imidazoleglycerol-phosphate dehydratase from Chlorobium phaeobacteroides (strain DSM 266 / SMG 266 / 2430).